The chain runs to 451 residues: Phosphoglucosamine mutase (451 aa).

The active-site Phosphoserine intermediate is Ser107. Ser107, Asp246, Asp248, and Asp250 together coordinate Mg(2+). Ser107 is modified (phosphoserine).

This sequence belongs to the phosphohexose mutase family. Mg(2+) is required as a cofactor. Post-translationally, activated by phosphorylation.

The enzyme catalyses alpha-D-glucosamine 1-phosphate = D-glucosamine 6-phosphate. Its function is as follows. Catalyzes the conversion of glucosamine-6-phosphate to glucosamine-1-phosphate. This chain is Phosphoglucosamine mutase, found in Burkholderia vietnamiensis (strain G4 / LMG 22486) (Burkholderia cepacia (strain R1808)).